The chain runs to 178 residues: Sec-independent protein translocase protein TatB (178 aa).

The helical transmembrane segment at 1–21 (MFDIGWSELVVIAVVALIAIG) threads the bilayer. The segment covering 77–86 (TSGNLMTKLT) has biased composition (polar residues). A disordered region spans residues 77–178 (TSGNLMTKLT…HEAVKDAKAS (102 aa)). Over residues 93 to 102 (PKLEDLDKPA) the composition is skewed to basic and acidic residues. Positions 155–165 (HATPEPAPATH) are enriched in low complexity. The span at 166-178 (ETPHEAVKDAKAS) shows a compositional bias: basic and acidic residues.

Belongs to the TatB family. As to quaternary structure, the Tat system comprises two distinct complexes: a TatABC complex, containing multiple copies of TatA, TatB and TatC subunits, and a separate TatA complex, containing only TatA subunits. Substrates initially bind to the TatABC complex, which probably triggers association of the separate TatA complex to form the active translocon.

Its subcellular location is the cell inner membrane. Part of the twin-arginine translocation (Tat) system that transports large folded proteins containing a characteristic twin-arginine motif in their signal peptide across membranes. Together with TatC, TatB is part of a receptor directly interacting with Tat signal peptides. TatB may form an oligomeric binding site that transiently accommodates folded Tat precursor proteins before their translocation. The polypeptide is Sec-independent protein translocase protein TatB (Nitrobacter hamburgensis (strain DSM 10229 / NCIMB 13809 / X14)).